Reading from the N-terminus, the 468-residue chain is Glutamyl-tRNA reductase (468 aa).

Substrate contacts are provided by residues 49 to 52, serine 109, 114 to 116, and glutamine 120; these read TCNR and EQQ. Cysteine 50 (nucleophile) is an active-site residue. An NADP(+)-binding site is contributed by 189–194; the sequence is GAGAMG. The disordered stretch occupies residues 443-468; that stretch reads VPSGFDAESRRGGGDMQSSPKRSPSN. Positions 458–468 are enriched in polar residues; that stretch reads MQSSPKRSPSN.

This sequence belongs to the glutamyl-tRNA reductase family. Homodimer.

It carries out the reaction (S)-4-amino-5-oxopentanoate + tRNA(Glu) + NADP(+) = L-glutamyl-tRNA(Glu) + NADPH + H(+). It functions in the pathway porphyrin-containing compound metabolism; protoporphyrin-IX biosynthesis; 5-aminolevulinate from L-glutamyl-tRNA(Glu): step 1/2. Functionally, catalyzes the NADPH-dependent reduction of glutamyl-tRNA(Glu) to glutamate 1-semialdehyde (GSA). This Mycobacterium tuberculosis (strain ATCC 25177 / H37Ra) protein is Glutamyl-tRNA reductase.